The sequence spans 271 residues: NADPH-dependent 7-cyano-7-deazaguanine reductase (271 aa).

I81 to S83 is a substrate binding site. S83–K84 is a binding site for NADPH. The Thioimide intermediate role is filled by C177. D184 acts as the Proton donor in catalysis. Substrate is bound at residue H216–E217. R245–G246 contributes to the NADPH binding site.

Belongs to the GTP cyclohydrolase I family. QueF type 2 subfamily. As to quaternary structure, homodimer.

The protein resides in the cytoplasm. It catalyses the reaction 7-aminomethyl-7-carbaguanine + 2 NADP(+) = 7-cyano-7-deazaguanine + 2 NADPH + 3 H(+). The protein operates within tRNA modification; tRNA-queuosine biosynthesis. In terms of biological role, catalyzes the NADPH-dependent reduction of 7-cyano-7-deazaguanine (preQ0) to 7-aminomethyl-7-deazaguanine (preQ1). The sequence is that of NADPH-dependent 7-cyano-7-deazaguanine reductase from Xanthomonas axonopodis pv. citri (strain 306).